Here is a 361-residue protein sequence, read N- to C-terminus: Chorismate synthase (361 aa).

Residues R48 and R54 each contribute to the NADP(+) site. FMN is bound by residues 125–127 (RSS), 238–239 (NA), G278, 293–297 (KPTSS), and R319.

The protein belongs to the chorismate synthase family. As to quaternary structure, homotetramer. FMNH2 serves as cofactor.

It catalyses the reaction 5-O-(1-carboxyvinyl)-3-phosphoshikimate = chorismate + phosphate. It participates in metabolic intermediate biosynthesis; chorismate biosynthesis; chorismate from D-erythrose 4-phosphate and phosphoenolpyruvate: step 7/7. Its function is as follows. Catalyzes the anti-1,4-elimination of the C-3 phosphate and the C-6 proR hydrogen from 5-enolpyruvylshikimate-3-phosphate (EPSP) to yield chorismate, which is the branch point compound that serves as the starting substrate for the three terminal pathways of aromatic amino acid biosynthesis. This reaction introduces a second double bond into the aromatic ring system. This Salmonella choleraesuis (strain SC-B67) protein is Chorismate synthase.